The primary structure comprises 247 residues: Pyridoxine 5'-phosphate synthase (247 aa).

Residue N12 participates in 3-amino-2-oxopropyl phosphate binding. Residue 14-15 (DH) coordinates 1-deoxy-D-xylulose 5-phosphate. R23 provides a ligand contact to 3-amino-2-oxopropyl phosphate. H48 acts as the Proton acceptor in catalysis. The 1-deoxy-D-xylulose 5-phosphate site is built by R50 and H55. The Proton acceptor role is filled by E75. T105 provides a ligand contact to 1-deoxy-D-xylulose 5-phosphate. The active-site Proton donor is H196. 3-amino-2-oxopropyl phosphate-binding positions include G197 and 218–219 (GH).

This sequence belongs to the PNP synthase family. In terms of assembly, homooctamer; tetramer of dimers.

The protein localises to the cytoplasm. The catalysed reaction is 3-amino-2-oxopropyl phosphate + 1-deoxy-D-xylulose 5-phosphate = pyridoxine 5'-phosphate + phosphate + 2 H2O + H(+). Its pathway is cofactor biosynthesis; pyridoxine 5'-phosphate biosynthesis; pyridoxine 5'-phosphate from D-erythrose 4-phosphate: step 5/5. Catalyzes the complicated ring closure reaction between the two acyclic compounds 1-deoxy-D-xylulose-5-phosphate (DXP) and 3-amino-2-oxopropyl phosphate (1-amino-acetone-3-phosphate or AAP) to form pyridoxine 5'-phosphate (PNP) and inorganic phosphate. In Pseudomonas fluorescens (strain SBW25), this protein is Pyridoxine 5'-phosphate synthase.